A 254-amino-acid polypeptide reads, in one-letter code: Imidazole glycerol phosphate synthase subunit HisF (254 aa).

Active-site residues include aspartate 12 and aspartate 131.

It belongs to the HisA/HisF family. Heterodimer of HisH and HisF.

The protein resides in the cytoplasm. It catalyses the reaction 5-[(5-phospho-1-deoxy-D-ribulos-1-ylimino)methylamino]-1-(5-phospho-beta-D-ribosyl)imidazole-4-carboxamide + L-glutamine = D-erythro-1-(imidazol-4-yl)glycerol 3-phosphate + 5-amino-1-(5-phospho-beta-D-ribosyl)imidazole-4-carboxamide + L-glutamate + H(+). The protein operates within amino-acid biosynthesis; L-histidine biosynthesis; L-histidine from 5-phospho-alpha-D-ribose 1-diphosphate: step 5/9. Its function is as follows. IGPS catalyzes the conversion of PRFAR and glutamine to IGP, AICAR and glutamate. The HisF subunit catalyzes the cyclization activity that produces IGP and AICAR from PRFAR using the ammonia provided by the HisH subunit. In Desulfitobacterium hafniense (strain Y51), this protein is Imidazole glycerol phosphate synthase subunit HisF.